Consider the following 297-residue polypeptide: 4-diphosphocytidyl-2-C-methyl-D-erythritol kinase (297 aa).

K10 is a catalytic residue. 95-105 (PVAGGMAGGSA) contributes to the ATP binding site. Residue D137 is part of the active site.

It belongs to the GHMP kinase family. IspE subfamily.

The catalysed reaction is 4-CDP-2-C-methyl-D-erythritol + ATP = 4-CDP-2-C-methyl-D-erythritol 2-phosphate + ADP + H(+). Its pathway is isoprenoid biosynthesis; isopentenyl diphosphate biosynthesis via DXP pathway; isopentenyl diphosphate from 1-deoxy-D-xylulose 5-phosphate: step 3/6. Its function is as follows. Catalyzes the phosphorylation of the position 2 hydroxy group of 4-diphosphocytidyl-2C-methyl-D-erythritol. The polypeptide is 4-diphosphocytidyl-2-C-methyl-D-erythritol kinase (Streptomyces avermitilis (strain ATCC 31267 / DSM 46492 / JCM 5070 / NBRC 14893 / NCIMB 12804 / NRRL 8165 / MA-4680)).